The chain runs to 351 residues: Photosystem II D2 protein (351 aa).

Residues 39 to 59 (TAYLAIGGWLTGTTFVTSWYT) traverse the membrane as a helical segment. His116 is a chlorophyll a binding site. Residues 123–139 (GFMLRQFEIARLVGIRP) traverse the membrane as a helical segment. The pheophytin a site is built by Gln128 and Asn141. A helical membrane pass occupies residues 151 to 164 (VFVSVFLMYPLGQS). Residue His196 coordinates chlorophyll a. Residues 206-226 (GALLCAIHGATVENTLFEDGE) form a helical membrane-spanning segment. Residues His213 and Phe260 each contribute to the a plastoquinone site. Residue His213 coordinates Fe cation. Fe cation is bound at residue His267. A helical membrane pass occupies residues 277–293 (GLWTSSIGIIGLALNLR).

Belongs to the reaction center PufL/M/PsbA/D family. PSII is composed of 1 copy each of membrane proteins PsbA, PsbB, PsbC, PsbD, PsbE, PsbF, PsbH, PsbI, PsbJ, PsbK, PsbL, PsbM, PsbT, PsbX, PsbY, PsbZ, Psb30/Ycf12, peripheral proteins PsbO, CyanoQ (PsbQ), PsbU, PsbV and a large number of cofactors. It forms dimeric complexes. Requires The D1/D2 heterodimer binds P680, chlorophylls that are the primary electron donor of PSII, and subsequent electron acceptors. It shares a non-heme iron and each subunit binds pheophytin, quinone, additional chlorophylls, carotenoids and lipids. There is also a Cl(-1) ion associated with D1 and D2, which is required for oxygen evolution. The PSII complex binds additional chlorophylls, carotenoids and specific lipids. as cofactor.

It localises to the cellular thylakoid membrane. It carries out the reaction 2 a plastoquinone + 4 hnu + 2 H2O = 2 a plastoquinol + O2. Functionally, photosystem II (PSII) is a light-driven water:plastoquinone oxidoreductase that uses light energy to abstract electrons from H(2)O, generating O(2) and a proton gradient subsequently used for ATP formation. It consists of a core antenna complex that captures photons, and an electron transfer chain that converts photonic excitation into a charge separation. The D1/D2 (PsbA/PsbD) reaction center heterodimer binds P680, the primary electron donor of PSII as well as several subsequent electron acceptors. D2 is needed for assembly of a stable PSII complex. The chain is Photosystem II D2 protein from Synechococcus sp. (strain WH7803).